The following is a 141-amino-acid chain: Putative pre-16S rRNA nuclease (141 aa).

This sequence belongs to the YqgF nuclease family.

Its subcellular location is the cytoplasm. Could be a nuclease involved in processing of the 5'-end of pre-16S rRNA. This is Putative pre-16S rRNA nuclease from Chlorobium luteolum (strain DSM 273 / BCRC 81028 / 2530) (Pelodictyon luteolum).